The chain runs to 99 residues: Aspartyl/glutamyl-tRNA(Asn/Gln) amidotransferase subunit C (99 aa).

It belongs to the GatC family. In terms of assembly, heterotrimer of A, B and C subunits.

The catalysed reaction is L-glutamyl-tRNA(Gln) + L-glutamine + ATP + H2O = L-glutaminyl-tRNA(Gln) + L-glutamate + ADP + phosphate + H(+). It carries out the reaction L-aspartyl-tRNA(Asn) + L-glutamine + ATP + H2O = L-asparaginyl-tRNA(Asn) + L-glutamate + ADP + phosphate + 2 H(+). Allows the formation of correctly charged Asn-tRNA(Asn) or Gln-tRNA(Gln) through the transamidation of misacylated Asp-tRNA(Asn) or Glu-tRNA(Gln) in organisms which lack either or both of asparaginyl-tRNA or glutaminyl-tRNA synthetases. The reaction takes place in the presence of glutamine and ATP through an activated phospho-Asp-tRNA(Asn) or phospho-Glu-tRNA(Gln). This chain is Aspartyl/glutamyl-tRNA(Asn/Gln) amidotransferase subunit C, found in Burkholderia lata (strain ATCC 17760 / DSM 23089 / LMG 22485 / NCIMB 9086 / R18194 / 383).